Here is a 552-residue protein sequence, read N- to C-terminus: Macrophage colony-stimulating factor 1 (552 aa).

The N-terminal stretch at 1–32 is a signal peptide; that stretch reads MTARGAAGRCPSSTWLGSRLLLVCLLMSRSIA. Residues 33-492 lie on the Extracellular side of the membrane; it reads KEVSEHCSHM…EGSSDPQIPE (460 aa). Intrachain disulfides connect Cys39–Cys122, Cys80–Cys171, and Cys134–Cys178. N-linked (GlcNAc...) asparagine glycosylation is found at Asn107, Asn154, and Asn172. Residues 197–207 show a composition bias toward low complexity; that stretch reads TPSSDPASASP. The tract at residues 197–293 is disordered; that stretch reads TPSSDPASAS…GGPVPGVEDI (97 aa). A compositionally biased stretch (polar residues) spans 254-267; that stretch reads PRSTCQTLESTEQP. Residues 268-278 show a composition bias toward basic and acidic residues; sequence NHGDRLTEDSQ. Ser308 is a glycosylation site (O-linked (Xyl...) (chondroitin sulfate) serine). 2 disordered regions span residues 321–412 and 439–465; these read KFSP…RVSN and GKRS…ARPV. 3 stretches are compositionally biased toward basic and acidic residues: residues 350–364, 382–396, and 439–450; these read STED…DRPL, EKTD…DHQE, and GKRSTRDRRSPA. An O-linked (GalNAc...) threonine glycan is attached at Thr360. The helical transmembrane segment at 493–515 threads the bilayer; that stretch reads SVFHLLVPGIILVLLTVGGLLFY. Residues 516 to 552 lie on the Cytoplasmic side of the membrane; it reads KWKWRSHRDPQTLDSSVGRPEDSSLTQDEDRQVELPV. The tract at residues 525–552 is disordered; that stretch reads PQTLDSSVGRPEDSSLTQDEDRQVELPV. A compositionally biased stretch (basic and acidic residues) spans 543 to 552; the sequence is DEDRQVELPV.

In terms of assembly, homodimer or heterodimer; disulfide-linked. Likely to exist in multiple forms: homodimer consisting of 2 identical 150-200 kDa proteoglycan subunits, heterodimer consisting of a 150-200 kDa proteoglycan subunit and a truncated 43 kDa subunit, and homodimer consisting of 2 identical 43 kDa subunits. Interacts with CSF1R. In terms of processing, N-glycosylated. O-glycosylated; contains chondroitin sulfate.

It is found in the cell membrane. The protein resides in the secreted. It localises to the extracellular space. In terms of biological role, cytokine that plays an essential role in the regulation of survival, proliferation and differentiation of hematopoietic precursor cells, especially mononuclear phagocytes, such as macrophages and monocytes. Promotes the release of pro-inflammatory chemokines, and thereby plays an important role in innate immunity and in inflammatory processes. Plays an important role in the regulation of osteoclast proliferation and differentiation, the regulation of bone resorption, and is required for normal bone development. Required for normal male and female fertility. Promotes reorganization of the actin cytoskeleton, regulates formation of membrane ruffles, cell adhesion and cell migration. Plays a role in lipoprotein clearance. The chain is Macrophage colony-stimulating factor 1 (Csf1) from Mus musculus (Mouse).